Here is a 20-residue protein sequence, read N- to C-terminus: Dihydroorotase-like protein (20 aa).

It belongs to the metallo-dependent hydrolases superfamily. DHOase family. PyrC' subfamily. In terms of assembly, heterododecamer of 6 active PyrB subunits and 6 non-catalytic PyrC' subunits.

Its function is as follows. Non-functional DHOase. The protein is Dihydroorotase-like protein (pyrC') of Pseudomonas fluorescens biotype A.